We begin with the raw amino-acid sequence, 2610 residues long: E3 ubiquitin-protein ligase HECTD1 (2610 aa).

A disordered region spans residues 246–269 (TVSGPSSACKPGRSTTGAPSTTAD). Positions 258–269 (RSTTGAPSTTAD) are enriched in polar residues. ANK repeat units lie at residues 395 to 424 (VGQTLLNWASAFGTQEMVEFLCERGADVNR), 426 to 455 (QRSSSLHYAACFGRPQVAKTLLRHGANPDL), 459 to 491 (DGKTPLDKARERGHSEVVAILQSPGDWMCPVNK), and 579 to 612 (ITATVLDQEDDDDGHLLALQIIRDLVDKGGDIFL). Residues 489-513 (VNKGDDKKKKDTNKDEEECNEPKGD) form a disordered region. The segment covering 491 to 501 (KGDDKKKKDTN) has biased composition (basic and acidic residues). Disordered stretches follow at residues 627–657 (LAGPSSDDENEEESKPEKEDEPQEDAKELQQ) and 707–748 (SSGS…LSAP). Phosphoserine is present on residues S631 and S640. Over residues 639-657 (ESKPEKEDEPQEDAKELQQ) the composition is skewed to basic and acidic residues. Residues 707–717 (SSGSPEGGSDS) are compositionally biased toward low complexity. Residues 718 to 729 (SESRSEFLEKLQ) show a composition bias toward basic and acidic residues. The MIB/HERC2 domain maps to 1266 to 1338 (VRSQVLKYMV…KFDLKLAPGY (73 aa)). Disordered stretches follow at residues 1343–1406 (VASP…KTER) and 1433–1483 (ENVP…SMGI). Positions 1348-1365 (PVSSTVSGTTQSWSSLVK) are enriched in polar residues. Composition is skewed to low complexity over residues 1373-1395 (SAAAGSSSRKGSSSSVCSVASSS) and 1441-1458 (GSSSSASTSTLTAETGSE). A Phosphoserine modification is found at S1384. Positions 1469-1479 (SVRTPGESSAI) are enriched in polar residues. S1488 is subject to Phosphoserine. Positions 1496–1515 (ELTNKEAASQRPLSSSASNR) are disordered. S1567 is subject to Phosphoserine. 2 disordered regions span residues 1592–1611 (GAQSFPNLTTPGTTSTVTMS) and 1674–1757 (ELDD…KGGR). Low complexity predominate over residues 1600-1611 (TTPGTTSTVTMS). Positions 1674 to 1703 (ELDDDEDLPEPDEEDDENEDDNQEDQEYEE) are enriched in acidic residues. T1760 carries the post-translational modification Phosphothreonine. S1772 carries the post-translational modification Phosphoserine. The tract at residues 1777–1797 (AFDPRPGRTNVQQTTDLEIPP) is disordered. The interval 2029-2103 (FTFPPDEFTS…AIVWLQNRRE (75 aa)) is K-box. In terms of domain architecture, HECT spans 2151 to 2610 (IHADRKSVLE…ATMEKGFHLN (460 aa)). The disordered stretch occupies residues 2297–2318 (HCTESQSEASTEEGHDSLSVGS). The residue at position 2318 (S2318) is a Phosphoserine. C2579 (glycyl thioester intermediate) is an active-site residue.

Belongs to the UPL family. K-HECT subfamily. Interacts with IGSF1.

The catalysed reaction is S-ubiquitinyl-[E2 ubiquitin-conjugating enzyme]-L-cysteine + [acceptor protein]-L-lysine = [E2 ubiquitin-conjugating enzyme]-L-cysteine + N(6)-ubiquitinyl-[acceptor protein]-L-lysine.. The protein operates within protein modification; protein ubiquitination. In terms of biological role, E3 ubiquitin-protein ligase which accepts ubiquitin from an E2 ubiquitin-conjugating enzyme in the form of a thioester and then directly transfers the ubiquitin to targeted substrates. Mediates 'Lys-63'-linked polyubiquitination of HSP90AA1 which leads to its intracellular localization and reduced secretion. Negatively regulating HSP90AA1 secretion in cranial mesenchyme cells may impair their emigration and may be essential for the correct development of the cranial neural folds and neural tube closure. Catalyzes ubiquitination and degradation of ZNF622, an assembly factor for the ribosomal 60S subunit, in hematopoietic cells, thereby promoting hematopoietic stem cell renewal. This Homo sapiens (Human) protein is E3 ubiquitin-protein ligase HECTD1.